Here is a 337-residue protein sequence, read N- to C-terminus: DNA-directed RNA polymerase subunit alpha (337 aa).

The tract at residues 1–233 (MIQKNWQELI…DQLAIFVNFE (233 aa)) is alpha N-terminal domain (alpha-NTD). An alpha C-terminal domain (alpha-CTD) region spans residues 249-337 (FNPALLKKVD…DLAKRYEDQY (89 aa)).

Belongs to the RNA polymerase alpha chain family. Homodimer. The RNAP catalytic core consists of 2 alpha, 1 beta, 1 beta' and 1 omega subunit. When a sigma factor is associated with the core the holoenzyme is formed, which can initiate transcription.

The catalysed reaction is RNA(n) + a ribonucleoside 5'-triphosphate = RNA(n+1) + diphosphate. Functionally, DNA-dependent RNA polymerase catalyzes the transcription of DNA into RNA using the four ribonucleoside triphosphates as substrates. The protein is DNA-directed RNA polymerase subunit alpha of Brucella anthropi (strain ATCC 49188 / DSM 6882 / CCUG 24695 / JCM 21032 / LMG 3331 / NBRC 15819 / NCTC 12168 / Alc 37) (Ochrobactrum anthropi).